We begin with the raw amino-acid sequence, 134 residues long: Small ribosomal subunit protein uS8 (134 aa).

This sequence belongs to the universal ribosomal protein uS8 family. In terms of assembly, part of the 30S ribosomal subunit. Contacts proteins S5 and S12.

One of the primary rRNA binding proteins, it binds directly to 16S rRNA central domain where it helps coordinate assembly of the platform of the 30S subunit. The polypeptide is Small ribosomal subunit protein uS8 (Thermotoga maritima (strain ATCC 43589 / DSM 3109 / JCM 10099 / NBRC 100826 / MSB8)).